The primary structure comprises 233 residues: Nucleoside diphosphate kinase 2, chloroplastic (233 aa).

A chloroplast-targeting transit peptide spans 1 to 67 (MEAMSGLSSP…LISHSLPRKK (67 aa)). ATP-binding residues include Lys93, Phe141, Arg169, Thr175, Arg186, and Asn196. The active-site Pros-phosphohistidine intermediate is the His199.

The protein belongs to the NDK family. Mg(2+) is required as a cofactor.

The protein resides in the plastid. It is found in the chloroplast. It carries out the reaction a 2'-deoxyribonucleoside 5'-diphosphate + ATP = a 2'-deoxyribonucleoside 5'-triphosphate + ADP. The enzyme catalyses a ribonucleoside 5'-diphosphate + ATP = a ribonucleoside 5'-triphosphate + ADP. Functionally, major role in the synthesis of nucleoside triphosphates other than ATP. The ATP gamma phosphate is transferred to the NDP beta phosphate via a ping-pong mechanism, using a phosphorylated active-site intermediate. The protein is Nucleoside diphosphate kinase 2, chloroplastic (NDPK2) of Spinacia oleracea (Spinach).